Consider the following 241-residue polypeptide: NAD-dependent protein deacylase (241 aa).

In terms of domain architecture, Deacetylase sirtuin-type spans 1–237; it reads MNFPYRNIVV…PKLVDEILAL (237 aa). 13–32 lines the NAD(+) pocket; sequence GAGISAESGIQTFRAQDGLW. Y57 and R60 together coordinate substrate. Position 94–97 (94–97) interacts with NAD(+); that stretch reads QNID. H112 serves as the catalytic Proton acceptor. Positions 120 and 139 each coordinate Zn(2+). NAD(+) contacts are provided by residues 179-181, 205-207, and A223; these read GTS and NLE.

This sequence belongs to the sirtuin family. Class III subfamily. In terms of assembly, monomer. Zn(2+) serves as cofactor.

It is found in the cytoplasm. It localises to the host cytoplasm. The protein resides in the host cytosol. Its subcellular location is the host nucleus. It catalyses the reaction N(6)-acetyl-L-lysyl-[protein] + NAD(+) + H2O = 2''-O-acetyl-ADP-D-ribose + nicotinamide + L-lysyl-[protein]. The enzyme catalyses N(6)-succinyl-L-lysyl-[protein] + NAD(+) + H2O = 2''-O-succinyl-ADP-D-ribose + nicotinamide + L-lysyl-[protein]. In terms of biological role, NAD-dependent lysine deacetylase and desuccinylase that specifically removes acetyl and succinyl groups on target proteins. Modulates the activities of several proteins which are inactive in their acylated form. In the intracellular pathogen V.parahaemolyticus, this enzyme regulates host response during infection by induction of host histone deacetylation; it specifically causes deacetylation of histone lysine residues H3K56, H3K9, H3K18 and H4K16 which results in transcriptional repression of several host genes involved in epigenetic regulation, immune response, and autophagy. This is NAD-dependent protein deacylase from Vibrio parahaemolyticus serotype O3:K6 (strain RIMD 2210633).